The following is a 464-amino-acid chain: Argininosuccinate lyase (464 aa).

It belongs to the lyase 1 family. Argininosuccinate lyase subfamily.

The protein resides in the cytoplasm. It catalyses the reaction 2-(N(omega)-L-arginino)succinate = fumarate + L-arginine. The protein operates within amino-acid biosynthesis; L-arginine biosynthesis; L-arginine from L-ornithine and carbamoyl phosphate: step 3/3. The polypeptide is Argininosuccinate lyase (Pseudomonas putida (strain W619)).